A 430-amino-acid polypeptide reads, in one-letter code: 2-deoxy-scyllo-inosose synthase (430 aa).

NAD(+) contacts are provided by residues Asp42, Glu73–Lys76, Gly105–Asn109, Thr129–Thr130, Ser140–Lys142, and Lys151–Asn152. The active site involves Lys142. Glu184 lines the Co(2+) pocket. Glu244 is a catalytic residue. Co(2+)-binding residues include His247 and His263. Residues Arg371–Pro430 are disordered. Residues Ala379–Ala399 are compositionally biased toward low complexity.

It belongs to the sugar phosphate cyclases superfamily. DOI synthase family. It depends on NAD(+) as a cofactor. Co(2+) is required as a cofactor.

The enzyme catalyses D-glucose 6-phosphate = 2-deoxy-L-scyllo-inosose + phosphate. It participates in metabolic intermediate biosynthesis; 2-deoxystreptamine biosynthesis; 2-deoxystreptamine from D-glucose 6-phosphate: step 1/4. Its pathway is antibiotic biosynthesis; neomycin biosynthesis. In terms of biological role, catalyzes the intramolecular carbocycle formation from D-glucose-6-phosphate to 2-deoxy-scyllo-inosose (DOI). The polypeptide is 2-deoxy-scyllo-inosose synthase (neoC) (Streptomyces fradiae (Streptomyces roseoflavus)).